The following is a 367-amino-acid chain: Large ribosomal subunit protein mL38 (367 aa).

A mitochondrion-targeting transit peptide spans 1 to 29 (MLRRSIHTTKILQKPNATSHIWSDFTTRP).

Belongs to the phosphatidylethanolamine-binding protein family. Mitochondrion-specific ribosomal protein mL38 subfamily. Component of the mitochondrial large ribosomal subunit (mt-LSU). Mature yeast 74S mitochondrial ribosomes consist of a small (37S) and a large (54S) subunit. The 37S small subunit contains a 15S ribosomal RNA (15S mt-rRNA) and 34 different proteins. The 54S large subunit contains a 21S rRNA (21S mt-rRNA) and 46 different proteins.

It is found in the mitochondrion. Its function is as follows. Component of the mitochondrial ribosome (mitoribosome), a dedicated translation machinery responsible for the synthesis of mitochondrial genome-encoded proteins, including at least some of the essential transmembrane subunits of the mitochondrial respiratory chain. The mitoribosomes are attached to the mitochondrial inner membrane and translation products are cotranslationally integrated into the membrane. This Saccharomyces cerevisiae (strain ATCC 204508 / S288c) (Baker's yeast) protein is Large ribosomal subunit protein mL38 (MRPL35).